We begin with the raw amino-acid sequence, 225 residues long: Ribose-5-phosphate isomerase A (225 aa).

Residues 27–30 (SGST), 80–83 (DGAD), and 93–96 (KGGG) each bind substrate. Glu-102 serves as the catalytic Proton acceptor. Position 120 (Lys-120) interacts with substrate.

The protein belongs to the ribose 5-phosphate isomerase family. As to quaternary structure, homodimer.

It carries out the reaction aldehydo-D-ribose 5-phosphate = D-ribulose 5-phosphate. The protein operates within carbohydrate degradation; pentose phosphate pathway; D-ribose 5-phosphate from D-ribulose 5-phosphate (non-oxidative stage): step 1/1. Functionally, catalyzes the reversible conversion of ribose-5-phosphate to ribulose 5-phosphate. The polypeptide is Ribose-5-phosphate isomerase A (Korarchaeum cryptofilum (strain OPF8)).